We begin with the raw amino-acid sequence, 471 residues long: Probable lysophospholipase BODYGUARD 2 (471 aa).

A signal peptide spans methionine 1–tyrosine 45. Cysteine 46 carries N-palmitoyl cysteine lipidation. One can recognise an AB hydrolase-1 domain in the interval valine 193–proline 296. The active site involves histidine 197. Serine 271 functions as the Nucleophile in the catalytic mechanism. Catalysis depends on charge relay system residues aspartate 418 and histidine 446.

It localises to the cell membrane. The protein resides in the secreted. Its subcellular location is the cell wall. Involved in cuticle development and morphogenesis. The polypeptide is Probable lysophospholipase BODYGUARD 2 (Arabidopsis thaliana (Mouse-ear cress)).